A 379-amino-acid chain; its full sequence is MPTVFPDDSVGLVSPQTLHFNEPLELTSGKSLAEYDLVIETYGELNATQSNAVLICHALSGHHHAAGYHSVDERKPGWWDSCIGPGKPIDTRKFFVVALNNLGGCNGSSGPASINPATGKVYGADFPMVTVEDWVHSQARLADRLGIRQWAAVVGGSLGGMQALQWTISYPERVRHCLCIASAPKLSAQNIAFNEVARQATLSDPEFLGGYFQEQGVIPKRGLKLARMVGHITYLSDDAMGAKFGRVLKTEKLNYDLHSVEFQVESYLRYQGEEFSTRFDANTYLLMTKALDYFDPAAAHGDDLVRTLEGVEADFCLMSFTTDWRFSPARSREIVDALIAAKKNVSYLEIDAPQGHDAFLMPIPRYLQAFSGYMNRISV.

One can recognise an AB hydrolase-1 domain in the interval 51-360 (NAVLICHALS…DAPQGHDAFL (310 aa)). The Nucleophile role is filled by serine 157. A substrate-binding site is contributed by arginine 227. Active-site residues include aspartate 323 and histidine 356. Residue aspartate 357 coordinates substrate.

Belongs to the AB hydrolase superfamily. MetX family. In terms of assembly, homodimer.

It localises to the cytoplasm. The enzyme catalyses L-homoserine + succinyl-CoA = O-succinyl-L-homoserine + CoA. The protein operates within amino-acid biosynthesis; L-methionine biosynthesis via de novo pathway; O-succinyl-L-homoserine from L-homoserine: step 1/1. Transfers a succinyl group from succinyl-CoA to L-homoserine, forming succinyl-L-homoserine. The polypeptide is Homoserine O-succinyltransferase (Pseudomonas aeruginosa (strain LESB58)).